A 116-amino-acid chain; its full sequence is Nitrogen regulatory PII-like protein (116 aa).

Belongs to the P(II) protein family. In terms of assembly, needs to interact with NrgA in order to localize correctly to the membrane.

Its subcellular location is the cell membrane. In terms of biological role, required for full induction of the nrgAB operon under conditions of ammonium limitation. In Bacillus subtilis (strain 168), this protein is Nitrogen regulatory PII-like protein (nrgB).